A 508-amino-acid chain; its full sequence is Zinc finger CCCH-type with G patch domain-containing protein (508 aa).

The disordered stretch occupies residues 67–86 (QQESSHHDSGTPETDTKTSV). Positions 69–86 (ESSHHDSGTPETDTKTSV) are enriched in basic and acidic residues. Residues 161-188 (RSMVPCPYFLEGKCKFAGAECRFSHGYL) form a C3H1-type zinc finger. The interval 253-282 (IYPLGPEEVESDSESDSQSDTGDSSSSKAA) is disordered. Residues 259–269 (EEVESDSESDS) show a composition bias toward acidic residues. The span at 270–279 (QSDTGDSSSS) shows a compositional bias: low complexity. Residues 310 to 356 (TKGIGSKLMAKMGYIFGKGLGKDGEGRVEPIEVVVLPQGKSLDKCAE) enclose the G-patch domain. Residues 404-426 (SLHDLRVSHPGAKPDIRKTRKSA) form a disordered region.

Its subcellular location is the nucleus. Its function is as follows. Transcription repressor. In Nematostella vectensis (Starlet sea anemone), this protein is Zinc finger CCCH-type with G patch domain-containing protein.